The following is a 36-amino-acid chain: Potassium channel toxin alpha-KTx 6.14 (36 aa).

4 cysteine pairs are disulfide-bonded: C5-C25, C11-C30, C15-C32, and C20-C35.

In terms of tissue distribution, expressed by the venom gland.

The protein resides in the secreted. Functionally, blocks Shaker B channels expressed in Sf9 cells, with a dissociation constant of 52 nM. This is Potassium channel toxin alpha-KTx 6.14 from Hoffmannihadrurus gertschi (Scorpion).